A 50-amino-acid chain; its full sequence is Sperm protamine P1 (50 aa).

The protein belongs to the protamine P1 family. As to quaternary structure, cross-linked by interchain disulfide bonds around the DNA-helix. Testis.

The protein resides in the nucleus. It is found in the chromosome. In terms of biological role, protamines substitute for histones in the chromatin of sperm during the haploid phase of spermatogenesis. They compact sperm DNA into a highly condensed, stable and inactive complex. This Saguinus imperator (Emperor tamarin) protein is Sperm protamine P1 (PRM1).